Reading from the N-terminus, the 209-residue chain is Uridine kinase (209 aa).

Position 16 to 23 (16 to 23 (GGSGSGKT)) interacts with ATP.

It belongs to the uridine kinase family.

It localises to the cytoplasm. It carries out the reaction uridine + ATP = UMP + ADP + H(+). The catalysed reaction is cytidine + ATP = CMP + ADP + H(+). Its pathway is pyrimidine metabolism; CTP biosynthesis via salvage pathway; CTP from cytidine: step 1/3. It functions in the pathway pyrimidine metabolism; UMP biosynthesis via salvage pathway; UMP from uridine: step 1/1. The chain is Uridine kinase from Lactiplantibacillus plantarum (strain ATCC BAA-793 / NCIMB 8826 / WCFS1) (Lactobacillus plantarum).